The following is a 327-amino-acid chain: Probable cell division protein WhiA (327 aa).

The segment at residues 275–308 (SLEELGRLADPPMTKDAVAGRIRRLLSMADRKAK) is a DNA-binding region (H-T-H motif).

Belongs to the WhiA family.

Involved in cell division and chromosome segregation. The protein is Probable cell division protein WhiA of Mycobacterium avium (strain 104).